Here is a 266-residue protein sequence, read N- to C-terminus: 3-methyl-2-oxobutanoate hydroxymethyltransferase (266 aa).

Mg(2+) is bound by residues Asp-45 and Asp-84. Residues Asp-45–Ser-46, Asp-84, and Lys-112 each bind 3-methyl-2-oxobutanoate. Residue Glu-114 coordinates Mg(2+). Catalysis depends on Glu-181, which acts as the Proton acceptor.

Belongs to the PanB family. In terms of assembly, homodecamer; pentamer of dimers. Mg(2+) is required as a cofactor.

It is found in the cytoplasm. The enzyme catalyses 3-methyl-2-oxobutanoate + (6R)-5,10-methylene-5,6,7,8-tetrahydrofolate + H2O = 2-dehydropantoate + (6S)-5,6,7,8-tetrahydrofolate. It functions in the pathway cofactor biosynthesis; (R)-pantothenate biosynthesis; (R)-pantoate from 3-methyl-2-oxobutanoate: step 1/2. Catalyzes the reversible reaction in which hydroxymethyl group from 5,10-methylenetetrahydrofolate is transferred onto alpha-ketoisovalerate to form ketopantoate. The protein is 3-methyl-2-oxobutanoate hydroxymethyltransferase of Stutzerimonas stutzeri (strain A1501) (Pseudomonas stutzeri).